The primary structure comprises 160 residues: Transcription elongation factor GreA (160 aa).

Residues 1–72 (MAEKTYPMTQ…QIQILETKIR (72 aa)) are a coiled coil.

It belongs to the GreA/GreB family.

Necessary for efficient RNA polymerase transcription elongation past template-encoded arresting sites. The arresting sites in DNA have the property of trapping a certain fraction of elongating RNA polymerases that pass through, resulting in locked ternary complexes. Cleavage of the nascent transcript by cleavage factors such as GreA or GreB allows the resumption of elongation from the new 3'terminus. GreA releases sequences of 2 to 3 nucleotides. The chain is Transcription elongation factor GreA from Streptococcus agalactiae serotype Ia (strain ATCC 27591 / A909 / CDC SS700).